Reading from the N-terminus, the 323-residue chain is Aspartate carbamoyltransferase catalytic subunit (323 aa).

2 residues coordinate carbamoyl phosphate: Arg71 and Thr72. Residue Lys99 coordinates L-aspartate. Arg121, His151, and Gln154 together coordinate carbamoyl phosphate. The L-aspartate site is built by Arg184 and Arg239. 2 residues coordinate carbamoyl phosphate: Gly280 and Pro281.

It belongs to the aspartate/ornithine carbamoyltransferase superfamily. ATCase family. As to quaternary structure, heterododecamer (2C3:3R2) of six catalytic PyrB chains organized as two trimers (C3), and six regulatory PyrI chains organized as three dimers (R2).

It carries out the reaction carbamoyl phosphate + L-aspartate = N-carbamoyl-L-aspartate + phosphate + H(+). Its pathway is pyrimidine metabolism; UMP biosynthesis via de novo pathway; (S)-dihydroorotate from bicarbonate: step 2/3. Its function is as follows. Catalyzes the condensation of carbamoyl phosphate and aspartate to form carbamoyl aspartate and inorganic phosphate, the committed step in the de novo pyrimidine nucleotide biosynthesis pathway. The protein is Aspartate carbamoyltransferase catalytic subunit of Ralstonia nicotianae (strain ATCC BAA-1114 / GMI1000) (Ralstonia solanacearum).